A 258-amino-acid polypeptide reads, in one-letter code: MAESRTSADGGMETSYGFREVADGEKQGLVNEVFHKVAKRYDIMNDVMSMGLHRAWKDAMISALNPRKDPSYKVLDVAGGTGDIAFRIVEASNRLAHATVLDINGSMLGVGAERAAKKKLTDNLTFVEANAEELPFEPNSFDAYTIAFGIRNVPRIDVALKEAYRVLKRGGRLLVLEFSEVDLPLLDRVYEAWSFNAIPQFGKAITGDAEPYQYLVESIRKFPNQQDFATMIREAGFSRVNFTNYTGGIAALHSGWKL.

Residues Thr81, Asp102, and 130-131 (NA) each bind S-adenosyl-L-methionine.

It belongs to the class I-like SAM-binding methyltransferase superfamily. MenG/UbiE family.

It catalyses the reaction a 2-demethylmenaquinol + S-adenosyl-L-methionine = a menaquinol + S-adenosyl-L-homocysteine + H(+). It carries out the reaction a 2-methoxy-6-(all-trans-polyprenyl)benzene-1,4-diol + S-adenosyl-L-methionine = a 5-methoxy-2-methyl-3-(all-trans-polyprenyl)benzene-1,4-diol + S-adenosyl-L-homocysteine + H(+). It participates in quinol/quinone metabolism; menaquinone biosynthesis; menaquinol from 1,4-dihydroxy-2-naphthoate: step 2/2. It functions in the pathway cofactor biosynthesis; ubiquinone biosynthesis. Its function is as follows. Methyltransferase required for the conversion of demethylmenaquinol (DMKH2) to menaquinol (MKH2) and the conversion of 2-polyprenyl-6-methoxy-1,4-benzoquinol (DDMQH2) to 2-polyprenyl-3-methyl-6-methoxy-1,4-benzoquinol (DMQH2). This chain is Ubiquinone/menaquinone biosynthesis C-methyltransferase UbiE, found in Rhizobium rhizogenes (strain K84 / ATCC BAA-868) (Agrobacterium radiobacter).